The chain runs to 371 residues: Surface protein P12p (371 aa).

Residues 1 to 20 form the signal peptide; sequence MHIVSFIIFFFALFFPISIC. 6-Cys domains are found at residues 23-168 and 169-343; these read INGV…LKKN and ILYG…FSNQ. Cystine bridges form between Cys27–Cys62, Cys76–Cys144, Cys93–Cys142, and Cys173–Cys245. Residue Asn184 is glycosylated (N-linked (GlcNAc...) asparagine). The segment at 202–239 is disordered; the sequence is GNNNNDDDNNDDDNNNDNNNNDNNNNNNNNNNNNNNNN. The segment covering 206 to 216 has biased composition (acidic residues); it reads NDDDNNDDDNN. Residues 217-239 are compositionally biased toward low complexity; sequence NDNNNNDNNNNNNNNNNNNNNNN. Residues Asn242 and Asn246 are each glycosylated (N-linked (GlcNAc...) asparagine). 2 cysteine pairs are disulfide-bonded: Cys260–Cys323 and Cys271–Cys321.

Its subcellular location is the cell surface. It localises to the cell membrane. In Plasmodium falciparum (isolate 3D7), this protein is Surface protein P12p (PFS12P).